Consider the following 236-residue polypeptide: Concanavalin-Ma (236 aa).

Mn(2+) contacts are provided by Glu8 and Asp10. Ca(2+) is bound by residues Asp10, Tyr12, Asn14, and Asp19. An a carbohydrate-binding site is contributed by Tyr12. Residues Asp19 and His24 each contribute to the Mn(2+) site. 98-99 (LY) contacts a carbohydrate. Residue Asp207 participates in Ca(2+) binding. An a carbohydrate-binding site is contributed by Arg227.

Belongs to the leguminous lectin family. In terms of assembly, homotetramer.

Glucose/D-mannose specific lectin. The chain is Concanavalin-Ma from Canavalia rosea (Beach bean).